A 69-amino-acid chain; its full sequence is MKLSETKSLLKDLRALSVEELTTREAELKKELFDLRFQAAAGRLENTAKLDEVKKTIARVKTVQAELNK.

This sequence belongs to the universal ribosomal protein uL29 family.

This chain is Large ribosomal subunit protein uL29 (rpmC), found in Lactococcus lactis subsp. lactis (strain IL1403) (Streptococcus lactis).